The chain runs to 289 residues: 2-hydroxy-6-oxononadienedioate/2-hydroxy-6-oxononatrienedioate hydrolase (289 aa).

Residue histidine 269 is the Proton acceptor of the active site.

The protein belongs to the AB hydrolase superfamily. MhpC family. Homodimer.

The enzyme catalyses (2Z,4E)-2-hydroxy-6-oxonona-2,4-dienedioate + H2O = (2Z)-2-hydroxypenta-2,4-dienoate + succinate + H(+). It catalyses the reaction (2Z,4E,7E)-2-hydroxy-6-oxonona-2,4,7-trienedioate + H2O = (2Z)-2-hydroxypenta-2,4-dienoate + fumarate + H(+). Its pathway is aromatic compound metabolism; 3-phenylpropanoate degradation. Functionally, catalyzes the cleavage of the C5-C6 bond of 2-hydroxy-6-oxononadienedioate and 2-hydroxy-6-oxononatrienedioate, a dienol ring fission product of the bacterial meta-cleavage pathway for degradation of phenylpropionic acid. This chain is 2-hydroxy-6-oxononadienedioate/2-hydroxy-6-oxononatrienedioate hydrolase, found in Cupriavidus pinatubonensis (strain JMP 134 / LMG 1197) (Cupriavidus necator (strain JMP 134)).